Reading from the N-terminus, the 217-residue chain is Cytidylate kinase (217 aa).

Position 10–18 (10–18 (GPAGAGKST)) interacts with ATP.

It belongs to the cytidylate kinase family. Type 1 subfamily.

It is found in the cytoplasm. It catalyses the reaction CMP + ATP = CDP + ADP. The enzyme catalyses dCMP + ATP = dCDP + ADP. The protein is Cytidylate kinase of Clostridium botulinum (strain Loch Maree / Type A3).